The following is a 490-amino-acid chain: Phosphoglucosamine mutase (490 aa).

Ser139 functions as the Phosphoserine intermediate in the catalytic mechanism. Mg(2+) contacts are provided by Ser139, Asp279, Asp281, and Asp283. The residue at position 139 (Ser139) is a Phosphoserine.

Belongs to the phosphohexose mutase family. It depends on Mg(2+) as a cofactor. In terms of processing, activated by phosphorylation.

It catalyses the reaction alpha-D-glucosamine 1-phosphate = D-glucosamine 6-phosphate. Functionally, catalyzes the conversion of glucosamine-6-phosphate to glucosamine-1-phosphate. The sequence is that of Phosphoglucosamine mutase from Nostoc sp. (strain PCC 7120 / SAG 25.82 / UTEX 2576).